We begin with the raw amino-acid sequence, 276 residues long: Dermonecrotic toxin LlSicTox-alphaIV1i (276 aa).

Residue His5 is part of the active site. The Mg(2+) site is built by Glu25 and Asp27. His41 (nucleophile) is an active-site residue. 2 cysteine pairs are disulfide-bonded: Cys45/Cys51 and Cys47/Cys193. Asp85 serves as a coordination point for Mg(2+).

The protein belongs to the arthropod phospholipase D family. Class II subfamily. It depends on Mg(2+) as a cofactor. As to expression, expressed by the venom gland.

Its subcellular location is the secreted. It carries out the reaction an N-(acyl)-sphingosylphosphocholine = an N-(acyl)-sphingosyl-1,3-cyclic phosphate + choline. The catalysed reaction is an N-(acyl)-sphingosylphosphoethanolamine = an N-(acyl)-sphingosyl-1,3-cyclic phosphate + ethanolamine. It catalyses the reaction a 1-acyl-sn-glycero-3-phosphocholine = a 1-acyl-sn-glycero-2,3-cyclic phosphate + choline. The enzyme catalyses a 1-acyl-sn-glycero-3-phosphoethanolamine = a 1-acyl-sn-glycero-2,3-cyclic phosphate + ethanolamine. In terms of biological role, dermonecrotic toxins cleave the phosphodiester linkage between the phosphate and headgroup of certain phospholipids (sphingolipid and lysolipid substrates), forming an alcohol (often choline) and a cyclic phosphate. This toxin acts on sphingomyelin (SM). It may also act on ceramide phosphoethanolamine (CPE), lysophosphatidylcholine (LPC) and lysophosphatidylethanolamine (LPE), but not on lysophosphatidylserine (LPS), and lysophosphatidylglycerol (LPG). It acts by transphosphatidylation, releasing exclusively cyclic phosphate products as second products. Induces dermonecrosis, hemolysis, increased vascular permeability, edema, inflammatory response, and platelet aggregation. The chain is Dermonecrotic toxin LlSicTox-alphaIV1i from Loxosceles laeta (South American recluse spider).